Here is a 439-residue protein sequence, read N- to C-terminus: Hydroxyornithine transacylase SID3 (439 aa).

A PTS1-type peroxisomal targeting signal motif is present at residues 437-439; that stretch reads SKL.

The protein belongs to the lysine N-acyltransferase mbtK family.

It localises to the peroxisome. It functions in the pathway siderophore biosynthesis. In terms of biological role, hydroxyornithine transacylase; part of the gene cluster that mediates the biosynthesis of hydroxamate-containing siderophores that play a critical role in virulence via intracellular iron acquisition during macrophage infection. The sequence is that of Hydroxyornithine transacylase SID3 from Ajellomyces capsulatus (Darling's disease fungus).